Reading from the N-terminus, the 418-residue chain is Glutamyl-tRNA reductase (418 aa).

Substrate contacts are provided by residues 49 to 52 (TCNR), serine 109, 114 to 116 (EPQ), and glutamine 120. The Nucleophile role is filled by cysteine 50. 189–194 (GAGETI) lines the NADP(+) pocket.

It belongs to the glutamyl-tRNA reductase family. Homodimer.

It carries out the reaction (S)-4-amino-5-oxopentanoate + tRNA(Glu) + NADP(+) = L-glutamyl-tRNA(Glu) + NADPH + H(+). The protein operates within porphyrin-containing compound metabolism; protoporphyrin-IX biosynthesis; 5-aminolevulinate from L-glutamyl-tRNA(Glu): step 1/2. Catalyzes the NADPH-dependent reduction of glutamyl-tRNA(Glu) to glutamate 1-semialdehyde (GSA). The polypeptide is Glutamyl-tRNA reductase (Enterobacter sp. (strain 638)).